Consider the following 556-residue polypeptide: Formate--tetrahydrofolate ligase 1 (556 aa).

65–72 (TPAGEGKS) provides a ligand contact to ATP.

Belongs to the formate--tetrahydrofolate ligase family.

The enzyme catalyses (6S)-5,6,7,8-tetrahydrofolate + formate + ATP = (6R)-10-formyltetrahydrofolate + ADP + phosphate. Its pathway is one-carbon metabolism; tetrahydrofolate interconversion. The sequence is that of Formate--tetrahydrofolate ligase 1 from Streptococcus pyogenes serotype M4 (strain MGAS10750).